Here is a 1707-residue protein sequence, read N- to C-terminus: Kinesin-like protein KIF1A (1707 aa).

Residues 5 to 354 (SVKVAVRVRP…LRYADRAKQI (350 aa)) enclose the Kinesin motor domain. The ATP site is built by G102, K103, S104, Y105, and S215. S104 contacts Mg(2+). Residues 439–466 (SEEAIERLKETEKIIAELNETWEEKLRR) adopt a coiled-coil conformation. Residues 525-581 (TRVGREDAERRQDIVLSGHFIKEEHCIFRSDSRGGGEAVVTLEPCEGADTYVNGKKV) form the FHA domain. Coiled-coil stretches lie at residues 637 to 671 (EKQG…LLEQ) and 811 to 831 (LEKL…AAEV). Positions 657–1105 (QYRREREEAT…LCKDVLSPLR (449 aa)) are required for interaction with CALM1, PPFIA2 and TANC2. Disordered regions lie at residues 1424-1462 (PVPE…EVPN) and 1536-1576 (TDVR…EKEP). Positions 1429-1453 (LSPASSEDSESRSSSGASSPLSAEG) are enriched in low complexity. In terms of domain architecture, PH spans 1592–1690 (IVSKKGYLHF…WLYAFNPLLA (99 aa)).

It belongs to the TRAFAC class myosin-kinesin ATPase superfamily. Kinesin family. Unc-104 subfamily. Dimeric motor; dimerization is required for ATP-driven processive motility. Monomer in vitro. Interacts with PPFIA1 and PPFIA4. Interacts with CALM1; the interaction is increased in presence of calcium and increases neuronal dense core vesicles motility. Interacts with PPFIA2 and TANC2; both interactions allow the recruitment of neuronal dense core vesicles to dendritic spines and decrease in presence of calcium. Interacts with SYT4 (unphosphorylated) and SYT11; both interactions increase in presence of calcium. Interacts with MADD.

The protein resides in the cytoplasm. It is found in the cytoskeleton. The protein localises to the cell projection. It localises to the neuron projection. Its subcellular location is the axon. The protein resides in the perinuclear region. It is found in the synapse. The protein localises to the cytoplasmic vesicle. It localises to the secretory vesicle. Its subcellular location is the neuronal dense core vesicle membrane. It carries out the reaction ATP + H2O + a kinesin associated with a microtubule at position (n) = ADP + phosphate a kinesin associated with a microtubule at position (n+1, toward the plus end).. Kinesin motor with a plus-end-directed microtubule motor activity, involved in anterograde axonal transport of synaptic vesicle precursors. Also required for neuronal dense core vesicles (DCVs) transport to the dendritic spines and axons. The interaction calcium-dependent with CALM1 increases vesicle motility and interaction with the scaffolding proteins PPFIA2 and TANC2 recruits DCVs to synaptic sites. This is Kinesin-like protein KIF1A from Rattus norvegicus (Rat).